The chain runs to 82 residues: Diphthamide biosynthesis protein 3 (82 aa).

Positions 4-60 constitute a DPH-type MB domain; sequence FHDEVEIEDFQYDEDSETYFYPCPCGDNFSITKEDLENGEDVATCPSCSLIIKVIYD. Fe cation contacts are provided by cysteine 26, cysteine 28, cysteine 48, and cysteine 51.

It belongs to the DPH3 family. Component of the 2-(3-amino-3-carboxypropyl)histidine synthase complex composed of DPH1, DPH2, DPH3 and a NADH-dependent reductase. Interacts with SERGEF. Fe(2+) is required as a cofactor.

Its subcellular location is the cytoplasm. It is found in the nucleus. The enzyme catalyses [3Fe-4S](1+)-[protein] + Fe(2+)-[Dph3] = [3Fe-4S](0)-[protein] + Fe(3+)-[Dph3]. It catalyses the reaction 2 [3Fe-4S](0)-[protein] + 2 Fe(2+)-[Dph3] + NADH = 2 [4Fe-4S](1+)-[protein] + 2 [Dph3] + NAD(+) + H(+). Its pathway is protein modification; peptidyl-diphthamide biosynthesis. Required for the first step of diphthamide biosynthesis, a post-translational modification of histidine which occurs in elongation factor 2. DPH1 and DPH2 transfer a 3-amino-3-carboxypropyl (ACP) group from S-adenosyl-L-methionine (SAM) to a histidine residue, the reaction is assisted by a reduction system comprising DPH3 and a NADH-dependent reductase. Acts as an electron donor to reduce the Fe-S cluster in DPH1-DPH2 keeping the [4Fe-4S] clusters in the active and reduced state. Restores iron to DPH1-DPH2 iron-sulfur clusters which have degraded from [4Fe-4S] to [3Fe-4S] by donating an iron atom to reform [4Fe-4S] clusters, in a manner dependent on the presence of elongation factor 2 and SAM. Associates with the elongator complex and is required for tRNA Wobble base modifications mediated by the elongator complex. The elongator complex is required for multiple tRNA modifications, including mcm5U (5-methoxycarbonylmethyl uridine), mcm5s 2U (5-methoxycarbonylmethyl-2-thiouridine), and ncm5U (5-carbamoylmethyl uridine). The protein is Diphthamide biosynthesis protein 3 (DPH3) of Cricetulus griseus (Chinese hamster).